The sequence spans 451 residues: MKTKLNIYNMQLLLFVFLVWDPARLVLANIQEDEAKNNITIFTRILDRLLDGYDNRLRPGLGDSITEVFTNIYVTSFGPVSDTDMEYTIDVFFRQKWKDERLKFKGPMNILRLNNLMASKIWTPDTFFHNGKKSVAHNMTMPNKLLRIQDDGTLLYTMRLTVQAECPMHLEDFPMDAHSCPLKFGSYAYTTSEVTYIWTYNASDSVQVAPDGSRLNQYDLLGQSIGKETIKSSTGEYTVMTAHFHLKRKIGYFVIQTYLPCIMTVILSQVSFWLNRESVPARTVFGVTTVLTMTTLSISARNSLPKVAYATAMDWFIAVCYAFVFSALIEFATVNYFTKRGWAWDGKSVVNDKKKEKASVMIQNNAYAVAVANYAPNLSKDPVLSTISKSATTPEPNKKPENKPAEAKKTFNSVSKIDRMSRIVFPVLFGTFNLVYWATYLNREPVLGVSP.

The signal sequence occupies residues 1 to 28 (MKTKLNIYNMQLLLFVFLVWDPARLVLA). Topologically, residues 29 to 249 (NIQEDEAKNN…MTAHFHLKRK (221 aa)) are extracellular. Asparagine 38 carries an N-linked (GlcNAc...) asparagine glycan. Arginine 94 is a 4-aminobutanoate binding site. An N-linked (GlcNAc...) asparagine glycan is attached at asparagine 138. Residue threonine 157 participates in 4-aminobutanoate binding. Cysteine 166 and cysteine 180 form a disulfide bridge. A helical membrane pass occupies residues 250-270 (IGYFVIQTYLPCIMTVILSQV). The Cytoplasmic portion of the chain corresponds to 271–280 (SFWLNRESVP). Residues 281–300 (ARTVFGVTTVLTMTTLSISA) traverse the membrane as a helical segment. The Extracellular segment spans residues 301-311 (RNSLPKVAYAT). The helical transmembrane segment at 312-332 (AMDWFIAVCYAFVFSALIEFA) threads the bilayer. At 333 to 420 (TVNYFTKRGW…FNSVSKIDRM (88 aa)) the chain is on the cytoplasmic side. Residues 421 to 441 (SRIVFPVLFGTFNLVYWATYL) traverse the membrane as a helical segment. The Extracellular portion of the chain corresponds to 442 to 451 (NREPVLGVSP).

It belongs to the ligand-gated ion channel (TC 1.A.9) family. Gamma-aminobutyric acid receptor (TC 1.A.9.5) subfamily. GABRA2 sub-subfamily. In terms of assembly, heteropentamer, formed by a combination of alpha (GABRA1-6), beta (GABRB1-3), gamma (GABRG1-3), delta (GABRD), epsilon (GABRE), rho (GABRR1-3), pi (GABRP) and theta (GABRQ) subunits, each subunit exhibiting distinct physiological and pharmacological properties. Interacts with UBQLN1. Interacts with KIF21B. Interacts with LHFPL4. Interacts with SHISA7; interaction leads to the regulation of GABA(A) receptor trafficking, channel deactivation kinetics and pharmacology. In terms of processing, glycosylated.

Its subcellular location is the postsynaptic cell membrane. It is found in the cell membrane. The protein localises to the cytoplasmic vesicle membrane. It localises to the cell projection. The protein resides in the dendrite. It catalyses the reaction chloride(in) = chloride(out). Its activity is regulated as follows. Activated by pentobarbital. Inhibited by the antagonist bicuculline. Its function is as follows. Alpha subunit of the heteropentameric ligand-gated chloride channel gated by gamma-aminobutyric acid (GABA), a major inhibitory neurotransmitter in the brain. GABA-gated chloride channels, also named GABA(A) receptors (GABAAR), consist of five subunits arranged around a central pore and contain GABA active binding site(s) located at the alpha and beta subunit interface(s). When activated by GABA, GABAARs selectively allow the flow of chloride anions across the cell membrane down their electrochemical gradient. Chloride influx into the postsynaptic neuron following GABAAR opening decreases the neuron ability to generate a new action potential, thereby reducing nerve transmission. The alpha-2 subunit exhibits synaptogenic activity together with beta-2 and very little to no activity together with beta-3, the gamma-2 subunit being necessary but not sufficient to induce rapid synaptic contacts formation. The protein is Gamma-aminobutyric acid receptor subunit alpha-2 (GABRA2) of Pongo abelii (Sumatran orangutan).